The chain runs to 303 residues: Sterol-4-alpha-carboxylate 3-dehydrogenase ERG26, decarboxylating (303 aa).

NADP(+) is bound by residues S8–L9 and T30–S32. S71 serves as a coordination point for substrate. The segment at P77–P96 is disordered. NADP(+) contacts are provided by residues Y102, K106, and I128–I131. Y102 is a binding site for substrate. K106 acts as the Proton donor in catalysis.

This sequence belongs to the 3-beta-HSD family. As to quaternary structure, heterotetramer of ERG25, ERG26, ERG27 and ERG28. ERG28 acts as a scaffold to tether ERG27 and other 4,4-demethylation-related enzymes, forming a demethylation enzyme complex, in the endoplasmic reticulum.

The protein resides in the endoplasmic reticulum membrane. The protein operates within steroid metabolism; ergosterol biosynthesis. Sterol-4-alpha-carboxylate 3-dehydrogenase; part of the third module of ergosterol biosynthesis pathway that includes the late steps of the pathway. ERG26 is a catalytic component of the C-4 demethylation complex that catalyzes the conversion of 4,4-dimethylfecosterol into fecosterol via 4-methylfecosterol. The third module or late pathway involves the ergosterol synthesis itself through consecutive reactions that mainly occur in the endoplasmic reticulum (ER) membrane. Firstly, the squalene synthase ERG9 catalyzes the condensation of 2 farnesyl pyrophosphate moieties to form squalene, which is the precursor of all steroids. Squalene synthase is crucial for balancing the incorporation of farnesyl diphosphate (FPP) into sterol and nonsterol isoprene synthesis. Secondly, squalene is converted into lanosterol by the consecutive action of the squalene epoxidase ERG1 and the lanosterol synthase ERG7. Then, the delta(24)-sterol C-methyltransferase ERG6 methylates lanosterol at C-24 to produce eburicol. Eburicol is the substrate of the sterol 14-alpha demethylase encoded by CYP51A, CYP51B and CYP51C, to yield 4,4,24-trimethyl ergosta-8,14,24(28)-trienol. CYP51B encodes the enzyme primarily responsible for sterol 14-alpha-demethylation, and plays an essential role in ascospore formation. CYP51A encodes an additional sterol 14-alpha-demethylase, induced on ergosterol depletion and responsible for the intrinsic variation in azole sensitivity. The third CYP51 isoform, CYP51C, does not encode a sterol 14-alpha-demethylase, but is required for full virulence on host wheat ears. The C-14 reductase ERG24 then reduces the C14=C15 double bond which leads to 4,4-dimethylfecosterol. A sequence of further demethylations at C-4, involving the C-4 demethylation complex containing the C-4 methylsterol oxidases ERG25, the sterol-4-alpha-carboxylate 3-dehydrogenase ERG26 and the 3-keto-steroid reductase ERG27, leads to the production of fecosterol via 4-methylfecosterol. ERG28 has a role as a scaffold to help anchor ERG25, ERG26 and ERG27 to the endoplasmic reticulum. The C-8 sterol isomerase ERG2 then catalyzes the reaction which results in unsaturation at C-7 in the B ring of sterols and thus converts fecosterol to episterol. The sterol-C5-desaturases ERG3A and ERG3BB then catalyze the introduction of a C-5 double bond in the B ring to produce 5-dehydroepisterol. The C-22 sterol desaturases ERG5A and ERG5B further convert 5-dehydroepisterol into ergosta-5,7,22,24(28)-tetraen-3beta-ol by forming the C-22(23) double bond in the sterol side chain. Finally, ergosta-5,7,22,24(28)-tetraen-3beta-ol is substrate of the C-24(28) sterol reductase ERG4 to produce ergosterol. In Gibberella zeae (strain ATCC MYA-4620 / CBS 123657 / FGSC 9075 / NRRL 31084 / PH-1) (Wheat head blight fungus), this protein is Sterol-4-alpha-carboxylate 3-dehydrogenase ERG26, decarboxylating.